We begin with the raw amino-acid sequence, 499 residues long: Serine carboxypeptidase 1 (499 aa).

Residues 1–30 form the signal peptide; sequence MARCRRRSGCTAGAALLLLLALALSGGGGA. Cystine bridges form between Cys-92–Cys-388, Cys-256–Cys-268, and Cys-291–Cys-355. The N-linked (GlcNAc...) asparagine glycan is linked to Asn-148. Ser-188 is a catalytic residue. A glycan (N-linked (GlcNAc...) asparagine) is linked at Asn-262. Residues 297–351 constitute a propeptide, linker peptide; sequence IKEVNLQNSKLPQSFKDLGTTNKPFPVRTRMLGRAWPLRAPVKAGRVPSWQEVAS. N-linked (GlcNAc...) asparagine glycosylation is present at Asn-407. Catalysis depends on residues Asp-423 and His-476. The short motif at 497 to 499 is the Microbody targeting signal element; that stretch reads SKL.

The protein belongs to the peptidase S10 family. Carboxypeptidase I is a dimer, where each monomer is composed of two chains linked by disulfide bonds. In terms of processing, the linker peptide is endoproteolytically excised during enzyme maturation.

It localises to the secreted. It carries out the reaction Release of a C-terminal amino acid with broad specificity.. Functionally, may be involved in the degradation of small peptides (2-5 residues) or in the degradation of storage proteins in the embryo. This is Serine carboxypeptidase 1 (CBP1) from Hordeum vulgare (Barley).